A 136-amino-acid polypeptide reads, in one-letter code: Ribosome-binding factor A (136 aa).

It belongs to the RbfA family. Monomer. Binds 30S ribosomal subunits, but not 50S ribosomal subunits or 70S ribosomes.

The protein localises to the cytoplasm. In terms of biological role, one of several proteins that assist in the late maturation steps of the functional core of the 30S ribosomal subunit. Associates with free 30S ribosomal subunits (but not with 30S subunits that are part of 70S ribosomes or polysomes). Required for efficient processing of 16S rRNA. May interact with the 5'-terminal helix region of 16S rRNA. The polypeptide is Ribosome-binding factor A (Rhizobium etli (strain ATCC 51251 / DSM 11541 / JCM 21823 / NBRC 15573 / CFN 42)).